Consider the following 137-residue polypeptide: Ribosome-binding factor A (137 aa).

This sequence belongs to the RbfA family. Monomer. Binds 30S ribosomal subunits, but not 50S ribosomal subunits or 70S ribosomes.

Its subcellular location is the cytoplasm. One of several proteins that assist in the late maturation steps of the functional core of the 30S ribosomal subunit. Associates with free 30S ribosomal subunits (but not with 30S subunits that are part of 70S ribosomes or polysomes). Required for efficient processing of 16S rRNA. May interact with the 5'-terminal helix region of 16S rRNA. This chain is Ribosome-binding factor A, found in Synechococcus sp. (strain ATCC 27144 / PCC 6301 / SAUG 1402/1) (Anacystis nidulans).